The following is a 294-amino-acid chain: Non-selective voltage-gated ion channel VDAC2 (294 aa).

A2 carries the post-translational modification N-acetylalanine. The ATP site is built by K23 and K31. K31 carries the post-translational modification N6-acetyllysine; alternate. K31 is modified (N6-succinyllysine; alternate). K31 participates in a covalent cross-link: Glycyl lysine isopeptide (Lys-Gly) (interchain with G-Cter in ubiquitin); alternate. 2 beta stranded membrane-spanning segments follow: residues 37–46 (LVKLDVKTKS) and 50–58 (VEFSTSGSS). A Glycyl lysine isopeptide (Lys-Gly) (interchain with G-Cter in ubiquitin) cross-link involves residue K64. A beta stranded transmembrane segment spans residues 65–75 (VTGTLETKYKW). Y78 bears the Phosphotyrosine mark. 3 beta stranded membrane-spanning segments follow: residues 80–87 (LTFTEKWN), 91–100 (TLGTEIAIED), and 106–115 (LKLTFDTTFS). T118 carries the phosphothreonine modification. K120 is subject to N6-acetyllysine; alternate. Residue K120 forms a Glycyl lysine isopeptide (Lys-Gly) (interchain with G-Cter in ubiquitin); alternate linkage. Residue K121 forms a Glycyl lysine isopeptide (Lys-Gly) (interchain with G-Cter in ubiquitin) linkage. The next 4 beta stranded transmembrane spans lie at 122 to 131 (SGKIKSSYKR), 134 to 141 (INLGCDVD), 148 to 156 (AIHGSAVFG), and 161 to 169 (LAGYQMTFD). Residue K172 forms a Glycyl lysine isopeptide (Lys-Gly) (interchain with G-Cter in ubiquitin) linkage. 6 beta stranded membrane passes run 174 to 186 (KLTRNNFAVGYRT), 189 to 196 (FQLHTNVN), 200 to 209 (EFGGSIYQKV), 213 to 222 (LDTSVNLAWT), 229 to 238 (RFGIAAKYQL), and 242 to 249 (ASISAKVN). S251 bears the Phosphoserine mark. NAD(+)-binding positions include 253-255 (LIG) and 271-275 (SALVD). Beta stranded transmembrane passes span 253-262 (LIGVGYTQTL) and 265-274 (GVKLTLSALV). Residue K277 is modified to N6-acetyllysine; alternate. K277 is covalently cross-linked (Glycyl lysine isopeptide (Lys-Gly) (interchain with G-Cter in ubiquitin); alternate). A beta stranded membrane pass occupies residues 284–293 (HKLGLALELE).

The protein belongs to the eukaryotic mitochondrial porin family. In terms of assembly, monomer, homodimer and higher order oligomers; formation of higher order structures is necessary for scramblase activity. Interacts with ARMC12 in a TBC1D21-dependent manner. Interacts with KLC3. Interacts with SPATA33. Interacts with PPP3CC in a SPATA33-dependent manner. Post-translationally, ubiquitinated by PRKN during mitophagy, leading to its degradation and enhancement of mitophagy. Deubiquitinated by USP30.

Its subcellular location is the mitochondrion outer membrane. The protein localises to the membrane. It catalyses the reaction chloride(in) = chloride(out). The enzyme catalyses K(+)(in) = K(+)(out). It carries out the reaction a 1,2-diacyl-sn-glycero-3-phospho-L-serine(in) = a 1,2-diacyl-sn-glycero-3-phospho-L-serine(out). The catalysed reaction is a 1,2-diacyl-sn-glycero-3-phosphocholine(in) = a 1,2-diacyl-sn-glycero-3-phosphocholine(out). It catalyses the reaction a 1,2-diacyl-sn-glycero-3-phospho-(1D-myo-inositol)(in) = a 1,2-diacyl-sn-glycero-3-phospho-(1D-myo-inositol)(out). Its function is as follows. Non-selective voltage-gated ion channel that mediates the transport of anions and cations through the mitochondrion outer membrane and plasma membrane. The channel adopts an open conformation at zero mV and a closed conformation at both positive and negative potentials. There are two populations of channels; the main that functions in a lower open-state conductance with lower ion selectivity, that switch, in a voltage-dependent manner, from the open to a low-conducting 'closed' state and the other that has a normal ion selectivity in the typical high conductance, 'open' state. Binds various lipids, including the sphingolipid ceramide, the phospholipid phosphatidylcholine, and the sterols cholesterol and oxysterol. Binding of ceramide promotes the mitochondrial outer membrane permeabilization (MOMP) apoptotic pathway. In terms of biological role, catalyzes the scrambling of phospholipids across the outer mitochondrial membrane; the mechanism is unrelated to channel activity and is capable of translocating both anionic and zwitterionic phospholipids. The polypeptide is Non-selective voltage-gated ion channel VDAC2 (Oryctolagus cuniculus (Rabbit)).